Reading from the N-terminus, the 318-residue chain is Ribosomal RNA small subunit methyltransferase H (318 aa).

S-adenosyl-L-methionine contacts are provided by residues 37–39 (GGH), D57, F83, D104, and Q111.

This sequence belongs to the methyltransferase superfamily. RsmH family.

Its subcellular location is the cytoplasm. It carries out the reaction cytidine(1402) in 16S rRNA + S-adenosyl-L-methionine = N(4)-methylcytidine(1402) in 16S rRNA + S-adenosyl-L-homocysteine + H(+). In terms of biological role, specifically methylates the N4 position of cytidine in position 1402 (C1402) of 16S rRNA. This is Ribosomal RNA small subunit methyltransferase H from Neisseria gonorrhoeae (strain ATCC 700825 / FA 1090).